A 365-amino-acid chain; its full sequence is tRNA/tmRNA (uracil-C(5))-methyltransferase (365 aa).

Residues Q189, Y217, N222, E238, and D298 each contribute to the S-adenosyl-L-methionine site. The active-site Nucleophile is the C323. Residue E357 is the Proton acceptor of the active site.

It belongs to the class I-like SAM-binding methyltransferase superfamily. RNA M5U methyltransferase family. TrmA subfamily.

It catalyses the reaction uridine(54) in tRNA + S-adenosyl-L-methionine = 5-methyluridine(54) in tRNA + S-adenosyl-L-homocysteine + H(+). It carries out the reaction uridine(341) in tmRNA + S-adenosyl-L-methionine = 5-methyluridine(341) in tmRNA + S-adenosyl-L-homocysteine + H(+). Dual-specificity methyltransferase that catalyzes the formation of 5-methyluridine at position 54 (m5U54) in all tRNAs, and that of position 341 (m5U341) in tmRNA (transfer-mRNA). This chain is tRNA/tmRNA (uracil-C(5))-methyltransferase, found in Shewanella halifaxensis (strain HAW-EB4).